Consider the following 481-residue polypeptide: 2-succinylbenzoate--CoA ligase (481 aa).

It belongs to the ATP-dependent AMP-binding enzyme family. MenE subfamily.

The catalysed reaction is 2-succinylbenzoate + ATP + CoA = 2-succinylbenzoyl-CoA + AMP + diphosphate. Its pathway is quinol/quinone metabolism; 1,4-dihydroxy-2-naphthoate biosynthesis; 1,4-dihydroxy-2-naphthoate from chorismate: step 5/7. The protein operates within quinol/quinone metabolism; menaquinone biosynthesis. Functionally, converts 2-succinylbenzoate (OSB) to 2-succinylbenzoyl-CoA (OSB-CoA). This Bacillus cereus (strain Q1) protein is 2-succinylbenzoate--CoA ligase.